The primary structure comprises 413 residues: Ribulose bisphosphate carboxylase large chain (413 aa).

2 residues coordinate substrate: Asn100 and Thr150. Lys152 acts as the Proton acceptor in catalysis. Substrate is bound at residue Lys154. Lys178, Asp180, and Glu181 together coordinate Mg(2+). Position 178 is an N6-carboxylysine (Lys178). Catalysis depends on His271, which acts as the Proton acceptor. Substrate contacts are provided by Arg272, His304, and Ser356.

It belongs to the RuBisCO large chain family. Type I subfamily. Heterohexadecamer of 8 large chains and 8 small chains; disulfide-linked. The disulfide link is formed within the large subunit homodimers. Mg(2+) is required as a cofactor. In terms of processing, the disulfide bond which can form in the large chain dimeric partners within the hexadecamer appears to be associated with oxidative stress and protein turnover.

It localises to the plastid. Its subcellular location is the chloroplast. The catalysed reaction is 2 (2R)-3-phosphoglycerate + 2 H(+) = D-ribulose 1,5-bisphosphate + CO2 + H2O. The enzyme catalyses D-ribulose 1,5-bisphosphate + O2 = 2-phosphoglycolate + (2R)-3-phosphoglycerate + 2 H(+). Functionally, ruBisCO catalyzes two reactions: the carboxylation of D-ribulose 1,5-bisphosphate, the primary event in carbon dioxide fixation, as well as the oxidative fragmentation of the pentose substrate in the photorespiration process. Both reactions occur simultaneously and in competition at the same active site. This chain is Ribulose bisphosphate carboxylase large chain (rbcL), found in Adiantum pedatum (Northern maidenhair fern).